A 322-amino-acid chain; its full sequence is Cysteine protease YopT (322 aa).

Active-site residues include Cys-139, His-258, and Asp-274.

This sequence belongs to the peptidase C58 family. In terms of assembly, interacts with human ARHA.

The protein localises to the secreted. Functionally, cysteine protease, which is translocated into infected cells and plays a central role in pathogenesis by cleaving the C-terminus end of the human small GTPase RhoA/ARHA, a regulator of cytoskeleton. Once cleaved, ARHA loses its lipid modification, and is released from the cell membrane, leading to the subsequent disruption of actin cytoskeleton of the host cell. The polypeptide is Cysteine protease YopT (yopT) (Yersinia pseudotuberculosis serotype I (strain IP32953)).